Here is a 440-residue protein sequence, read N- to C-terminus: Transposon TyH3 Gag polyprotein (440 aa).

Composition is skewed to polar residues over residues M1–S23, T48–S60, and Q127–F152. 3 disordered regions span residues M1 to Q93, P126 to P173, and G352 to Y440. Low complexity predominate over residues T153–T165. The interval N299–H401 is RNA-binding. Over residues N402–S418 the composition is skewed to low complexity. Residue S416 is modified to Phosphoserine. The span at K419–N428 shows a compositional bias: polar residues. Residues N429–Y440 are compositionally biased toward basic and acidic residues.

Homotrimer.

It is found in the cytoplasm. In terms of biological role, capsid protein (CA) is the structural component of the virus-like particle (VLP), forming the shell that encapsulates the retrotransposons dimeric RNA genome. The particles are assembled from trimer-clustered units and there are holes in the capsid shells that allow for the diffusion of macromolecules. CA also has nucleocapsid-like chaperone activity, promoting primer tRNA(i)-Met annealing to the multipartite primer-binding site (PBS), dimerization of Ty1 RNA and initiation of reverse transcription. The sequence is that of Transposon TyH3 Gag polyprotein (TY1A) from Saccharomyces cerevisiae (Baker's yeast).